Here is a 137-residue protein sequence, read N- to C-terminus: Acidic phospholipase A2 PL-I (137 aa).

Positions 1 to 17 are cleaved as a signal peptide; the sequence is AVCVSLLGASSIRPLPL. 7 cysteine pairs are disulfide-bonded: Cys-28–Cys-89, Cys-44–Cys-136, Cys-46–Cys-62, Cys-61–Cys-117, Cys-68–Cys-110, Cys-78–Cys-103, and Cys-96–Cys-108. Residues Tyr-45, Gly-47, and Gly-49 each contribute to the Ca(2+) site. Residue His-65 is part of the active site. Asp-66 provides a ligand contact to Ca(2+). Residue Asp-111 is part of the active site.

Ca(2+) serves as cofactor. Expressed by the venom gland.

Its subcellular location is the secreted. The enzyme catalyses a 1,2-diacyl-sn-glycero-3-phosphocholine + H2O = a 1-acyl-sn-glycero-3-phosphocholine + a fatty acid + H(+). Its function is as follows. Snake venom phospholipase A2 (PLA2) that may act in the hemostasis system of the prey. Exhibits hydrolytic activities, and prefers the anionic micelles (dPPC with deoxycholate) (793 umol/mg/min) to the zwitterionic micelles (dPPC with Triton X-100) (591 umol/mg/min). PLA2 catalyzes the calcium-dependent hydrolysis of the 2-acyl groups in 3-sn-phosphoglycerides. The protein is Acidic phospholipase A2 PL-I of Walterinnesia aegyptia (Desert black snake).